Consider the following 232-residue polypeptide: Large ribosomal subunit protein uL1 (232 aa).

This sequence belongs to the universal ribosomal protein uL1 family. Part of the 50S ribosomal subunit.

Functionally, binds directly to 23S rRNA. The L1 stalk is quite mobile in the ribosome, and is involved in E site tRNA release. Protein L1 is also a translational repressor protein, it controls the translation of the L11 operon by binding to its mRNA. This is Large ribosomal subunit protein uL1 from Bartonella quintana (strain Toulouse) (Rochalimaea quintana).